A 578-amino-acid polypeptide reads, in one-letter code: Nuclear receptor subfamily 1 group D member 2 (578 aa).

Residues 1–60 (MELNAGGVIAYISSSSSASSPASCHSEGSENSFQSSSSSVPSSPNSSNCDANGNPKNTDV) form a required for phosphorylation by CSNK1E and cytoplasmic localization region. The modulating stretch occupies residues 1–99 (MELNAGGVIA…HSGMTKFSGM (99 aa)). The segment covering 13-47 (SSSSSASSPASCHSEGSENSFQSSSSSVPSSPNSS) has biased composition (low complexity). The interval 13–89 (SSSSSASSPA…KPGAPGMTKS (77 aa)) is disordered. Ser-46 carries the phosphoserine; by GSK3-beta modification. The segment covering 48-61 (NCDANGNPKNTDVS) has biased composition (polar residues). The nuclear receptor DNA-binding region spans 100–176 (VLLCKVCGDV…VGMSRDAVRF (77 aa)). NR C4-type zinc fingers lie at residues 103–123 (CKVCGDVASGFHYGVHACEGC) and 140–164 (CLKNENCSIMRMNRNRCQQCRFKKC). 2 positions are modified to N6-acetyllysine; by KAT5: Lys-162 and Lys-163. The disordered stretch occupies residues 214–247 (EPHEQSVPPAQEQLRPKPQLEQENIKSTPPPSDF). Positions 227 to 237 (LRPKPQLEQEN) are enriched in basic and acidic residues. 2 disulfide bridges follow: Cys-336/Cys-342 and Cys-373/Cys-383. Residues 368 to 578 (RNSYLCSTGG…EELLAFKVHP (211 aa)) enclose the NR LBD domain. The heme site is built by Cys-383 and His-567. Residues 396 to 578 (SGHEIWEEFS…EELLAFKVHP (183 aa)) form an interaction with ZNHIT1 region.

It belongs to the nuclear hormone receptor family. NR1 subfamily. As to quaternary structure, binds DNA as a monomer or a homodimer. Interacts with NCOA5 coactivator, leading to a strong increase of transcription of target genes. Interacts (via N-terminus) with KAT5. Interacts (via C-terminus) with HDAC1. Interacts with ZNHIT1. Interacts with SIAH2. Deacetylated by HDAC1. Acetylation and deacetylation regulate its transcriptional regulatory activity. In terms of processing, under more reducing intracellular redox conditions, Cys-383 is in its heme-bound state, which is optimal for recruitment of the NCOR1/HDAC3 corepressor complex and repression of target genes. When subjected to oxidative stress conditions, Cys-383 undergoes oxidation to form a disulfide bridge with Cys-373, also triggering a ligand switch that results in release of bound heme and derepression of target genes. Post-translationally, ubiquitinated by SIAH2; leading to its proteasomal degradation. Phosphorylated by CSNK1E; phosphorylation enhances its cytoplasmic localization.

It localises to the nucleus. The protein localises to the cytoplasm. Its activity is regulated as follows. The heme-bound form can bind gaseous signaling molecules such as CO and nitric oxide (NO) and NO can reverse its transcriptional repressor activity. Functionally, transcriptional repressor which coordinates circadian rhythm and metabolic pathways in a heme-dependent manner. Integral component of the complex transcription machinery that governs circadian rhythmicity and forms a critical negative limb of the circadian clock by directly repressing the expression of core clock components BMAL1 and CLOCK. Also regulates genes involved in metabolic functions, including lipid metabolism and the inflammatory response. Acts as a receptor for heme which stimulates its interaction with the NCOR1/HDAC3 corepressor complex, enhancing transcriptional repression. Recognizes two classes of DNA response elements within the promoter of its target genes and can bind to DNA as either monomers or homodimers, depending on the nature of the response element. Binds as a monomer to a response element composed of the consensus half-site motif 5'-[A/G]GGTCA-3' preceded by an A/T-rich 5' sequence (RevRE), or as a homodimer to a direct repeat of the core motif spaced by two nuclegotides (RevDR-2). Acts as a potent competitive repressor of ROR alpha (RORA) function and also negatively regulates the expression of NR1D1. Regulates lipid and energy homeostasis in the skeletal muscle via repression of genes involved in lipid metabolism and myogenesis including: CD36, FABP3, FABP4, UCP3, SCD1 and MSTN. Regulates hepatic lipid metabolism via the repression of APOC3. Represses gene expression at a distance in macrophages by inhibiting the transcription of enhancer-derived RNAs (eRNAs). In addition to its activity as a repressor, can also act as a transcriptional activator. Acts as a transcriptional activator of the sterol regulatory element-binding protein 1 (SREBF1) and the inflammatory mediator interleukin-6 (IL6) in the skeletal muscle. Plays a role in the regulation of circadian sleep/wake cycle; essential for maintaining wakefulness during the dark phase or active period. Key regulator of skeletal muscle mitochondrial function; negatively regulates the skeletal muscle expression of core clock genes and genes involved in mitochondrial biogenesis, fatty acid beta-oxidation and lipid metabolism. May play a role in the circadian control of neutrophilic inflammation in the lung. This is Nuclear receptor subfamily 1 group D member 2 from Rattus norvegicus (Rat).